The sequence spans 477 residues: Bifunctional protein HldE (477 aa).

The tract at residues 1–318 (MQIQLPMFQN…RRAVQQEQGA (318 aa)) is ribokinase. 195–198 (NLSE) lines the ATP pocket. D264 is a catalytic residue. The interval 344–477 (FTNGCFDIIH…VEKIRKDQVK (134 aa)) is cytidylyltransferase.

In the N-terminal section; belongs to the carbohydrate kinase PfkB family. This sequence in the C-terminal section; belongs to the cytidylyltransferase family. Homodimer.

The catalysed reaction is D-glycero-beta-D-manno-heptose 7-phosphate + ATP = D-glycero-beta-D-manno-heptose 1,7-bisphosphate + ADP + H(+). It carries out the reaction D-glycero-beta-D-manno-heptose 1-phosphate + ATP + H(+) = ADP-D-glycero-beta-D-manno-heptose + diphosphate. The protein operates within nucleotide-sugar biosynthesis; ADP-L-glycero-beta-D-manno-heptose biosynthesis; ADP-L-glycero-beta-D-manno-heptose from D-glycero-beta-D-manno-heptose 7-phosphate: step 1/4. It participates in nucleotide-sugar biosynthesis; ADP-L-glycero-beta-D-manno-heptose biosynthesis; ADP-L-glycero-beta-D-manno-heptose from D-glycero-beta-D-manno-heptose 7-phosphate: step 3/4. In terms of biological role, catalyzes the phosphorylation of D-glycero-D-manno-heptose 7-phosphate at the C-1 position to selectively form D-glycero-beta-D-manno-heptose-1,7-bisphosphate. Its function is as follows. Catalyzes the ADP transfer from ATP to D-glycero-beta-D-manno-heptose 1-phosphate, yielding ADP-D-glycero-beta-D-manno-heptose. In Hahella chejuensis (strain KCTC 2396), this protein is Bifunctional protein HldE.